The primary structure comprises 245 residues: Bis(5'-nucleosyl)-tetraphosphatase PrpE [asymmetrical] (245 aa).

Belongs to the PrpE family. The cofactor is Ni(2+).

It carries out the reaction P(1),P(4)-bis(5'-guanosyl) tetraphosphate + H2O = GMP + GTP + 2 H(+). Asymmetrically hydrolyzes Ap4p to yield AMP and ATP. The sequence is that of Bis(5'-nucleosyl)-tetraphosphatase PrpE [asymmetrical] from Geobacillus sp. (strain WCH70).